We begin with the raw amino-acid sequence, 265 residues long: Type III pantothenate kinase (265 aa).

An ATP-binding site is contributed by 9 to 16 (DAGNSRIK). Residues Tyr96 and 103-106 (GSDR) contribute to the substrate site. Asp105 (proton acceptor) is an active-site residue. Residue Thr129 participates in ATP binding. Thr189 contacts substrate.

It belongs to the type III pantothenate kinase family. Homodimer. The cofactor is NH4(+). Requires K(+) as cofactor.

It is found in the cytoplasm. It catalyses the reaction (R)-pantothenate + ATP = (R)-4'-phosphopantothenate + ADP + H(+). The protein operates within cofactor biosynthesis; coenzyme A biosynthesis; CoA from (R)-pantothenate: step 1/5. Catalyzes the phosphorylation of pantothenate (Pan), the first step in CoA biosynthesis. This Burkholderia orbicola (strain AU 1054) protein is Type III pantothenate kinase.